The following is a 251-amino-acid chain: MIRQLWTELNAAILFYTVLPLPQRWPTQFAGMSRWAPIVGLILGLILAVSDRLLAVGQFPLPLRSLLIVLLAIALTGGLHLDGAMDTADGLAVPNPDRRLEVMSDSHTGAFGAIAAIAIISLKTIALCYLPAPRSLLILLIPVWGRWAQVLAIVRYPYLKAEGKGAIHKQTGRGAIDLLPGAIALVLGIGAIARFHSLTVALQLLAIGLLWAWATGAWLQKKLGGQTGDTYGAIVEWTEALIWVSFTIGQV.

6 helical membrane-spanning segments follow: residues 29–49 (FAGM…ILAV), 65–85 (SLLI…DGAM), 110–130 (AFGA…LCYL), 136–156 (LLIL…IVRY), 175–195 (AIDL…IARF), and 198–218 (LTVA…TGAW).

The protein belongs to the CobS family. The cofactor is Mg(2+).

The protein resides in the cell inner membrane. The enzyme catalyses alpha-ribazole + adenosylcob(III)inamide-GDP = adenosylcob(III)alamin + GMP + H(+). It catalyses the reaction alpha-ribazole 5'-phosphate + adenosylcob(III)inamide-GDP = adenosylcob(III)alamin 5'-phosphate + GMP + H(+). It functions in the pathway cofactor biosynthesis; adenosylcobalamin biosynthesis; adenosylcobalamin from cob(II)yrinate a,c-diamide: step 7/7. Functionally, joins adenosylcobinamide-GDP and alpha-ribazole to generate adenosylcobalamin (Ado-cobalamin). Also synthesizes adenosylcobalamin 5'-phosphate from adenosylcobinamide-GDP and alpha-ribazole 5'-phosphate. The chain is Adenosylcobinamide-GDP ribazoletransferase from Synechococcus elongatus (strain ATCC 33912 / PCC 7942 / FACHB-805) (Anacystis nidulans R2).